The following is a 626-amino-acid chain: UvrABC system protein C (626 aa).

Residues 20–97 (ECSGVYKMLD…IKKFQPKFNI (78 aa)) enclose the GIY-YIG domain. The region spanning 207 to 242 (IALQANLSKKMQELSSQMRFEEAAEIRDRIKALSYV) is the UVR domain.

It belongs to the UvrC family. In terms of assembly, interacts with UvrB in an incision complex.

It is found in the cytoplasm. In terms of biological role, the UvrABC repair system catalyzes the recognition and processing of DNA lesions. UvrC both incises the 5' and 3' sides of the lesion. The N-terminal half is responsible for the 3' incision and the C-terminal half is responsible for the 5' incision. This chain is UvrABC system protein C, found in Rickettsia prowazekii (strain Madrid E).